Here is a 103-residue protein sequence, read N- to C-terminus: Phosphoribosyl-ATP pyrophosphatase (103 aa).

It belongs to the PRA-PH family.

Its subcellular location is the cytoplasm. The catalysed reaction is 1-(5-phospho-beta-D-ribosyl)-ATP + H2O = 1-(5-phospho-beta-D-ribosyl)-5'-AMP + diphosphate + H(+). Its pathway is amino-acid biosynthesis; L-histidine biosynthesis; L-histidine from 5-phospho-alpha-D-ribose 1-diphosphate: step 2/9. This is Phosphoribosyl-ATP pyrophosphatase from Cereibacter sphaeroides (strain KD131 / KCTC 12085) (Rhodobacter sphaeroides).